Here is a 670-residue protein sequence, read N- to C-terminus: Transcription factor 4 (670 aa).

Residues 1-83 (MHHQQRMAAL…GTPYDHMTSR (83 aa)) form an essential for MYOD1 inhibition region. 6 disordered regions span residues 24 to 244 (AMFS…LGNS), 262 to 320 (LSYP…SQTG), 335 to 378 (HTNN…EGPL), 406 to 426 (PSTAVPGGHGDMHGIMGPSHN), 465 to 573 (SLLP…MANN), and 637 to 670 (KRREEEKVSSEPPPLSLAGPHPGMGDAANHMGQM). Positions 29 to 49 (PVSSGKNGPTSLASGHFTGSN) are enriched in polar residues. Phosphoserine is present on residues Ser-66, Ser-87, and Ser-92. 4 stretches are compositionally biased toward polar residues: residues 107-125 (GSYSSYGRENVQGCHQQSL), 136-154 (GTLSPTKPGSQYYQYSSNN), 205-215 (PAASTFPSSFF), and 265-305 (PSHS…TDSI). Positions 336–347 (TNNSFSSNPSTP) are enriched in low complexity. The span at 364 to 373 (NGGQASSSPN) shows a compositional bias: polar residues. Ser-371 is subject to Phosphoserine. The interval 378 to 399 (LHSLQSRIEDRLERLDDAIHVL) is leucine-zipper. 2 stretches are compositionally biased toward low complexity: residues 466 to 479 (LLPNQVPVPQLPVQ) and 502 to 511 (GQSVSSGSSE). Ser-514 carries the phosphoserine modification. Basic and acidic residues-rich tracts occupy residues 526–542 (KSSEDKKLDDDKKDIKS) and 558–573 (PEQKAEREKERRMANN). Residues 567–620 (ERRMANNARERLRVRDINEAFKELGRMVQLHLKSDKPQTKLLILHQAVAVILSL) form the bHLH domain. Positions 622 to 645 (QQVRERNLNPKAACLKRREEEKVS) are class A specific domain.

In terms of assembly, efficient DNA binding requires dimerization with another bHLH protein. Isoform 2 seems to form inactive heterodimers with MYOD1. Interacts with HIVEP2. Interacts with NEUROD2. Interacts with AGBL1. Interacts with BHLHA9. In terms of tissue distribution, expressed in the cerebral cortex, Purkinje and granule cell layers of the cerebellum, olfactory neuroepithelium, pyramidal cells of hippocampal layers CA1-CA4, and in the granular cells of the dentate gyrus.

The protein resides in the nucleus. Transcription factor that binds to the immunoglobulin enhancer Mu-E5/KE5-motif. Involved in the initiation of neuronal differentiation. Activates transcription by binding to the E box (5'-CANNTG-3'). Isoform 2 inhibits MYOD1 activation of the cardiac alpha-actin promoter. Binds to the E-box present in the somatostatin receptor 2 initiator element (SSTR2-INR) to activate transcription. May have a regulatory function in developmental processes as well as during neuronal plasticity. This is Transcription factor 4 (Tcf4) from Mus musculus (Mouse).